The sequence spans 387 residues: Zinc transporter 7 (387 aa).

The Cytoplasmic segment spans residues 1–37; that stretch reads MLPLSIKDDEYKPAKFNLVVKLSGWFRSILADKTSRN. The helical transmembrane segment at 38 to 58 threads the bilayer; the sequence is LFFFLCLNLSFAFVELLYGIW. The Lumenal portion of the chain corresponds to 59-67; that stretch reads SNSLGLISD. The chain crosses the membrane as a helical span at residues 68–88; the sequence is SFHMFFDCTALLAGLAASVIS. The Cytoplasmic portion of the chain corresponds to 89–102; it reads RWRSNDSFSYGYVR. The helical transmembrane segment at 103 to 123 threads the bilayer; it reads AEVLAGFVNGLFLIFTAFFIF. At 124–140 the chain is on the lumenal side; it reads SEGVERALEPPDVHHDR. Residues 141–161 form a helical membrane-spanning segment; it reads LLPVSIAGLLVNLVGIFVFQH. Positions 161–232 are his-rich loop; the sequence is HGGHGHSHGG…HDDQHCHDDH (72 aa). Over 162–247 the chain is Cytoplasmic; the sequence is GGHGHSHGGD…KGSSKQILQG (86 aa). The tract at residues 167–237 is disordered; it reads SHGGDDHGHS…CHDDHTLTPG (71 aa). Residues 187-201 show a composition bias toward basic residues; that stretch reads GHSHGGHGHSHGGHG. Composition is skewed to basic and acidic residues over residues 202 to 214 and 221 to 233; these read HSHE…DHGH and HSHD…DDHT. The chain crosses the membrane as a helical span at residues 248–268; that stretch reads VFLHIVADTLGSVGVIISAIL. Topologically, residues 269–273 are lumenal; that stretch reads MQKYD. The helical transmembrane segment at 274–294 threads the bilayer; it reads LMIADPICSMLIALLIGVSVV. Residues 295–387 lie on the Cytoplasmic side of the membrane; the sequence is PLLRESIGIL…LYVQIEVAAM (93 aa).

It belongs to the cation diffusion facilitator (CDF) transporter (TC 2.A.4) family. SLC30A subfamily. In terms of assembly, homooligomer.

It localises to the golgi apparatus membrane. Its subcellular location is the cytoplasmic vesicle. The protein resides in the golgi apparatus. It is found in the trans-Golgi network. The protein localises to the sarcoplasmic reticulum. It localises to the mitochondrion. The catalysed reaction is Zn(2+)(in) = Zn(2+)(out). Its function is as follows. Zinc ion transporter mediating zinc entry from the cytosol into the lumen of organelles along the secretory pathway. By contributing to zinc ion homeostasis within the early secretory pathway, regulates the activation and folding of enzymes like alkaline phosphatases. The polypeptide is Zinc transporter 7 (slc30a7) (Danio rerio (Zebrafish)).